Here is a 997-residue protein sequence, read N- to C-terminus: Protein Smaug (997 aa).

Residues 1-37 (MKYATGTDNAMTSGISGQTNNSNSASTEMQPTTSTPT) are compositionally biased toward polar residues. Disordered regions lie at residues 1-69 (MKYA…QSQP) and 329-370 (LCPA…GSSS). 2 stretches are compositionally biased toward low complexity: residues 44–69 (TPTA…QSQP) and 329–338 (LCPASGSRSS). 2 positions are modified to phosphoserine: Ser-564 and Ser-575. Residues 583-763 (EFKPNYIKFH…KDLKFKLSKM (181 aa)) form an interaction with cup region. Residues 600–654 (GIGLWLKSLRLHKYIELFKNMTYEEMLLITEDFLQSVGVTKGASHKLALCIEKLK) form the SAM domain. 2 disordered regions span residues 773-892 (HVKP…MQQM) and 944-972 (GSSD…TSAE). Composition is skewed to polar residues over residues 802–822 (NGSN…NFSL) and 854–864 (HQPQYKSSSYP). Residue Ser-970 is modified to Phosphoserine.

Belongs to the SMAUG family. In terms of assembly, interacts with oskar (osk). Binds to the 3'-UTR of nos. Interacts with cup, which in turn recruits eIF4-E, leading to an indirect interaction between smg and eIF4-E that prevents mRNA translation.

It is found in the cytoplasm. In terms of biological role, translation regulator that binds to the 3'-UTR of specific mRNAs such as nanos (nos) and prevent their translation. Prevents translation of unlocalized nos in the bulk cytoplasm via the recruitment of cup. The polypeptide is Protein Smaug (Drosophila erecta (Fruit fly)).